The following is a 527-amino-acid chain: Zinc finger protein 35 (527 aa).

Positions M9–P221 are globular domain. The disordered stretch occupies residues P16–V38. Glycyl lysine isopeptide (Lys-Gly) (interchain with G-Cter in SUMO2) cross-links involve residues K20, K21, K99, K117, K125, K144, K158, K189, and K214. 2 C2H2-type zinc fingers span residues F222–H244 and F250–H272. K276 participates in a covalent cross-link: Glycyl lysine isopeptide (Lys-Gly) (interchain with G-Cter in SUMO2). C2H2-type zinc fingers lie at residues Y278 to H300, F306 to H328, Y334 to H356, F362 to H384, Y390 to H412, Y418 to H440, Y446 to H468, Y474 to H496, and Y502 to H524.

It belongs to the krueppel C2H2-type zinc-finger protein family.

Its subcellular location is the nucleus. May be involved in transcriptional regulation. Involved in cell differentiation and/or proliferation. The protein is Zinc finger protein 35 (ZNF35) of Homo sapiens (Human).